The primary structure comprises 330 residues: Ketol-acid reductoisomerase (NADP(+)) (330 aa).

The KARI N-terminal Rossmann domain maps to 2–182 (VEIYYDDDAS…GGTRAGALRT (181 aa)). Residues 25-28 (YGSQ), Ser-51, and Ser-53 contribute to the NADP(+) site. His-108 is an active-site residue. Gly-134 lines the NADP(+) pocket. In terms of domain architecture, KARI C-terminal knotted spans 183-328 (TFTEETETDL…AKLRPLMSWI (146 aa)). Asp-191, Glu-195, Glu-227, and Glu-231 together coordinate Mg(2+). Ser-252 contributes to the substrate binding site.

Belongs to the ketol-acid reductoisomerase family. Requires Mg(2+) as cofactor.

The catalysed reaction is (2R)-2,3-dihydroxy-3-methylbutanoate + NADP(+) = (2S)-2-acetolactate + NADPH + H(+). It catalyses the reaction (2R,3R)-2,3-dihydroxy-3-methylpentanoate + NADP(+) = (S)-2-ethyl-2-hydroxy-3-oxobutanoate + NADPH + H(+). It participates in amino-acid biosynthesis; L-isoleucine biosynthesis; L-isoleucine from 2-oxobutanoate: step 2/4. It functions in the pathway amino-acid biosynthesis; L-valine biosynthesis; L-valine from pyruvate: step 2/4. Involved in the biosynthesis of branched-chain amino acids (BCAA). Catalyzes an alkyl-migration followed by a ketol-acid reduction of (S)-2-acetolactate (S2AL) to yield (R)-2,3-dihydroxy-isovalerate. In the isomerase reaction, S2AL is rearranged via a Mg-dependent methyl migration to produce 3-hydroxy-3-methyl-2-ketobutyrate (HMKB). In the reductase reaction, this 2-ketoacid undergoes a metal-dependent reduction by NADPH to yield (R)-2,3-dihydroxy-isovalerate. In Frankia alni (strain DSM 45986 / CECT 9034 / ACN14a), this protein is Ketol-acid reductoisomerase (NADP(+)).